The sequence spans 125 residues: MDPRLVRAGSLVLLLALLVQDQGAAHPARAGQKYKPLIRRSEEDSQALGQEGDVAARAADEEEDAAGPGDALRQPAFKTLLASREKRLQPEGSCFGQKMDRIGHVSGMGCNKFDPNKGSSSTGKK.

Positions 1–25 (MDPRLVRAGSLVLLLALLVQDQGAA) are cleaved as a signal peptide. 2 disordered regions span residues 23 to 78 (GAAH…PAFK) and 105 to 125 (VSGM…TGKK). Residues 26–85 (HPARAGQKYKPLIRRSEEDSQALGQEGDVAARAADEEEDAAGPGDALRQPAFKTLLASRE) constitute a propeptide that is removed on maturation. A disulfide bridge links C94 with C110.

It belongs to the natriuretic peptide family. Expressed by the venom gland.

The protein resides in the secreted. Its function is as follows. Exhibits natriuretic and vasodepressor activity. Acts by stimulating cGMP. The polypeptide is Natriuretic peptide GNP1 (Varanus varius (Lace monitor lizard)).